A 219-amino-acid chain; its full sequence is Dehydration-responsive element-binding protein 1E (219 aa).

Low complexity predominate over residues 1–19; sequence MEWAYYGSGYSSSGTPSPV. The tract at residues 1 to 44 is disordered; sequence MEWAYYGSGYSSSGTPSPVGGDGDEDSYMTVSSAPPKRRAGRTK. The AP2/ERF DNA-binding region spans 52 to 109; the sequence is VYKGVRSRNPGRWVCEVREPHGKQRIWLGTFETAEMAARAHDVAAMALRGRAACLNFA.

The protein belongs to the AP2/ERF transcription factor family. ERF subfamily.

The protein localises to the nucleus. Its function is as follows. Transcriptional activator that binds specifically to the DNA sequence 5'-[AG]CCGAC-3'. Binding to the C-repeat/DRE element mediates high salinity- and dehydration-inducible transcription. In Oryza sativa subsp. indica (Rice), this protein is Dehydration-responsive element-binding protein 1E (DREB1E).